A 585-amino-acid polypeptide reads, in one-letter code: MITRMSELFLRTLRDDPADAEVPSHKLLIRAGYVRPVGPGLYSWLPLGLKVLRKIENIVRNEMNAIGGQEILFPALLPRAPYETTNRWTEYGDTLFRLQDRRNNDYLLGPTHEEMFTLTVKGEYSSYKDFPLRLYQIQNKYRDEARPRAGILRGREFLMKDSYSFDIDDDGLKNAYIAHREAYQRIFDLLKVRYVIVSAVSGAMGGSASEEFLAESDVGEDTYVRCLQSGYAANVEAVVTMVPEPISSEQIAGLASATVHHTGDTPTIATLVDWANGADLGRTVTAADTLKNVMLKVREPGGEWELLGVGVPGDREVDDKRLGAALEPAEYAMLDDADFARYPFLVKGYIGPKALLANGVRYLVDPRVVDGTAWITGADELGKHVVDLVAGRDFTPDGTIEAAEVREGDPSPDGAGPLVAARGIEIGHVFQLGRKYADAFGADVLGENGKPVRLTMGSYGIGVSRLVAVIAEQHHDELGLRWPSTVSPFDVHVVIANKDADARTGATELAAELDRLGVDVLLDDRTASPGVKFKDAELLGVPWIVVVGRGWADGIVELRDRFGGDKHEIPVDGAAERISAALAGA.

It belongs to the class-II aminoacyl-tRNA synthetase family. ProS type 1 subfamily. As to quaternary structure, homodimer.

The protein localises to the cytoplasm. It carries out the reaction tRNA(Pro) + L-proline + ATP = L-prolyl-tRNA(Pro) + AMP + diphosphate. Catalyzes the attachment of proline to tRNA(Pro) in a two-step reaction: proline is first activated by ATP to form Pro-AMP and then transferred to the acceptor end of tRNA(Pro). As ProRS can inadvertently accommodate and process non-cognate amino acids such as alanine and cysteine, to avoid such errors it has two additional distinct editing activities against alanine. One activity is designated as 'pretransfer' editing and involves the tRNA(Pro)-independent hydrolysis of activated Ala-AMP. The other activity is designated 'posttransfer' editing and involves deacylation of mischarged Ala-tRNA(Pro). The misacylated Cys-tRNA(Pro) is not edited by ProRS. This is Proline--tRNA ligase from Mycolicibacterium vanbaalenii (strain DSM 7251 / JCM 13017 / BCRC 16820 / KCTC 9966 / NRRL B-24157 / PYR-1) (Mycobacterium vanbaalenii).